Reading from the N-terminus, the 146-residue chain is Large ribosomal subunit protein uL15 (146 aa).

Over residues 1–13 (MKLHELYPAEGSR) the composition is skewed to basic and acidic residues. The interval 1–55 (MKLHELYPAEGSRKVRNRVGRGAATGNGKTSGRGQKGQKARSGGKVRPGFEGGQL) is disordered. Gly residues predominate over residues 23–35 (AATGNGKTSGRGQ).

The protein belongs to the universal ribosomal protein uL15 family. In terms of assembly, part of the 50S ribosomal subunit.

In terms of biological role, binds to the 23S rRNA. The protein is Large ribosomal subunit protein uL15 of Staphylococcus carnosus (strain TM300).